We begin with the raw amino-acid sequence, 340 residues long: HTH-type transcriptional regulator CelR (340 aa).

One can recognise an HTH lacI-type domain in the interval 1–61 (MERRRRPTLE…PNRAARTLVT (61 aa)). The H-T-H motif DNA-binding region spans 9–28 (LEMVAALAGVGRGTVSRVIN).

Its subcellular location is the cytoplasm. With respect to regulation, activity is controlled by cytoplasmic cellobiose levels. Binding of CelR to the celE promoter is inhibited specifically by low concentrations of cellobiose, the major end product of cellulases. Activity may also be regulated through post-translational modification. Functionally, transcriptional regulator that regulates the expression of all six cellulases, encoded by the cel genes (designated celA through celF). Acts as a repressor. Specifically binds to a 14-bp inverted repeat site, which is present in the upstream region of the cellulase genes. The chain is HTH-type transcriptional regulator CelR from Thermobifida fusca (Thermomonospora fusca).